The primary structure comprises 165 residues: Large ribosomal subunit protein uL11 (165 aa).

It belongs to the universal ribosomal protein uL11 family. Component of the large ribosomal subunit. Mature ribosomes consist of a small (40S) and a large (60S) subunit. The 40S subunit contains about 32 different proteins and 1 molecule of RNA (18S). The 60S subunit contains 45 different proteins and 3 molecules of RNA (25S, 5.8S and 5S).

It is found in the cytoplasm. Its function is as follows. Component of the ribosome, a large ribonucleoprotein complex responsible for the synthesis of proteins in the cell. The small ribosomal subunit (SSU) binds messenger RNAs (mRNAs) and translates the encoded message by selecting cognate aminoacyl-transfer RNA (tRNA) molecules. The large subunit (LSU) contains the ribosomal catalytic site termed the peptidyl transferase center (PTC), which catalyzes the formation of peptide bonds, thereby polymerizing the amino acids delivered by tRNAs into a polypeptide chain. The nascent polypeptides leave the ribosome through a tunnel in the LSU and interact with protein factors that function in enzymatic processing, targeting, and the membrane insertion of nascent chains at the exit of the ribosomal tunnel. The sequence is that of Large ribosomal subunit protein uL11 (RPL12) from Candida albicans (strain SC5314 / ATCC MYA-2876) (Yeast).